Here is a 103-residue protein sequence, read N- to C-terminus: UPF0145 protein Dred_2155 (103 aa).

Belongs to the UPF0145 family.

The sequence is that of UPF0145 protein Dred_2155 from Desulforamulus reducens (strain ATCC BAA-1160 / DSM 100696 / MI-1) (Desulfotomaculum reducens).